The following is a 1740-amino-acid chain: DNA polymerase (1740 aa).

A disordered region spans residues 472 to 491 (IEMPHNQEDSDSEKEDEDTD). The span at 480-491 (DSDSEKEDEDTD) shows a compositional bias: acidic residues. Residues 1189–1334 (VWGFFMGDGS…LFYLLKSLGY (146 aa)) form the DOD-type homing endonuclease domain. The interval 1673-1701 (PKESGSKTAKKPYQSQKLQKTKSSNKSQI) is disordered. Positions 1685–1700 (YQSQKLQKTKSSNKSQ) are enriched in polar residues.

Belongs to the DNA polymerase type-B family. Post-translationally, this protein undergoes a protein self splicing that involves a post-translational excision of the intervening region (intein) followed by peptide ligation.

It carries out the reaction DNA(n) + a 2'-deoxyribonucleoside 5'-triphosphate = DNA(n+1) + diphosphate. The polypeptide is DNA polymerase (POLB) (Acanthamoeba polyphaga (Amoeba)).